We begin with the raw amino-acid sequence, 1342 residues long: DNA-directed RNA polymerase subunit beta (1342 aa).

The protein belongs to the RNA polymerase beta chain family. In terms of assembly, the RNAP catalytic core consists of 2 alpha, 1 beta, 1 beta' and 1 omega subunit. When a sigma factor is associated with the core the holoenzyme is formed, which can initiate transcription.

The enzyme catalyses RNA(n) + a ribonucleoside 5'-triphosphate = RNA(n+1) + diphosphate. Functionally, DNA-dependent RNA polymerase catalyzes the transcription of DNA into RNA using the four ribonucleoside triphosphates as substrates. This Histophilus somni (strain 2336) (Haemophilus somnus) protein is DNA-directed RNA polymerase subunit beta.